The primary structure comprises 578 residues: Vacuolar protein 8 (578 aa).

Glycine 2 carries the N-myristoyl glycine lipid modification. 3 S-palmitoyl cysteine lipidation sites follow: cysteine 4, cysteine 5, and cysteine 7. Phosphoserine occurs at positions 11 and 16. ARM repeat units follow at residues 37-75 (DKDQLDFYSGGPLKALTTLVYSDNLNLQRSAALAFAEIT), 76-114 (EKYVRQVSREVLEPILILLQSQDPQIQVAACAALGNLAV), 116-155 (NENKLLIVEMGGLEPLINQMMGDNVEVQCNAVGCITNLAT), 157-196 (DDNKHKIATSGALIPLTKLAKSKHIRVQRNATGALLNMTH), 198-237 (EENRKELVNAGAVPVLVSLLSSTDPDVQYYCTTALSNIAV), 239-280 (EANR…NLAS), 282-321 (TSYQLEIVRAGGLPHLVKLIQSDSIPLVLASVACIRNISI), 323-363 (PLNE…NLAA), and 407-446 (DVSKLDLLEANILDALIPMTFSQNQEVSGNAAAALANLCS). Lysine 77 participates in a covalent cross-link: Glycyl lysine isopeptide (Lys-Gly) (interchain with G-Cter in ubiquitin). Residue lysine 515 forms a Glycyl lysine isopeptide (Lys-Gly) (interchain with G-Cter in ubiquitin) linkage. The tract at residues 527–557 (SGIDVKNPGSNNNPSSNDNNSNNNDTGSEHQ) is disordered. Residues 533–552 (NPGSNNNPSSNDNNSNNNDT) show a composition bias toward low complexity.

Belongs to the beta-catenin family. Interacts with NVJ1. Forms heterotetramers of two VAC8 and two NVJ1 or two VAC8 and two ATG13. Palmitoylated on one or more of its N-terminal cysteine residues by PFA3, which is required for vacuole fusion.

It localises to the vacuole membrane. Functionally, functions in both vacuole inheritance and protein targeting from the cytoplasm to vacuole (cvt). Involved in the formation of nucleus-vacuole junctions (NVJs) during piecemeal microautophagy of the nucleus (PMN). NVJs are interorganelle interfaces mediated by NVJ1 in the nuclear envelope and VAC8 on the vacuole membrane. Together, NVJ1 and VAC8 form Velcro-like patches through which teardrop-like portions of the nucleus are pinched off into the vacuolar lumen and degraded by the PMN process. This Saccharomyces cerevisiae (strain ATCC 204508 / S288c) (Baker's yeast) protein is Vacuolar protein 8 (VAC8).